Here is a 257-residue protein sequence, read N- to C-terminus: Phosphate import ATP-binding protein PstB (257 aa).

In terms of domain architecture, ABC transporter spans 11 to 252 (FNISRLYLYI…PKNELTEKYV (242 aa)). Position 43–50 (43–50 (GPSGSGKS)) interacts with ATP.

This sequence belongs to the ABC transporter superfamily. Phosphate importer (TC 3.A.1.7) family. The complex is composed of two ATP-binding proteins (PstB), two transmembrane proteins (PstC and PstA) and a solute-binding protein (PstS).

It localises to the cell membrane. It carries out the reaction phosphate(out) + ATP + H2O = ADP + 2 phosphate(in) + H(+). Part of the ABC transporter complex PstSACB involved in phosphate import. Responsible for energy coupling to the transport system. The sequence is that of Phosphate import ATP-binding protein PstB from Saccharolobus solfataricus (strain ATCC 35092 / DSM 1617 / JCM 11322 / P2) (Sulfolobus solfataricus).